The sequence spans 156 residues: Ribosomal RNA large subunit methyltransferase H (156 aa).

Residues Leu-73, Gly-104, and 123–128 (ISSMTL) contribute to the S-adenosyl-L-methionine site.

It belongs to the RNA methyltransferase RlmH family. As to quaternary structure, homodimer.

It is found in the cytoplasm. The catalysed reaction is pseudouridine(1915) in 23S rRNA + S-adenosyl-L-methionine = N(3)-methylpseudouridine(1915) in 23S rRNA + S-adenosyl-L-homocysteine + H(+). Its function is as follows. Specifically methylates the pseudouridine at position 1915 (m3Psi1915) in 23S rRNA. This is Ribosomal RNA large subunit methyltransferase H from Burkholderia cenocepacia (strain HI2424).